A 414-amino-acid polypeptide reads, in one-letter code: MQHNKLREVRGTKDLLDDELYKFQYIQHLAQTIASRYGFIPVDTPIIEFTEVFTKLGNTSDIVTKEMYNFKDKAGEDITLRPEFTSAIVRLLISKNLTIPVKLFSSGPVFRYERPQKCRQRQFHQINFEFFGSDSPIADVEMISLCYNILSELKLSDRIKLEINFLGDQETINSYKIHLVEYLNKYQKDLSEDSQRRLVVNPLRILDSKSPEDCKILLNAPSISDFYNQNSQNFFKEVLDGLDNLSINYVINHNIVRGLDYYCKTVFEFTTSELGSQNSVIAGGRYDGLVKSMGGHSTPAIGFAAGVERLSALIDYEHKKPKRIVLIPIGDDAISYAIKLAYELRCKGIHVCWNNYRGTSLKNELRKANDTDIVLIFGDEELQSNTVKVKDMKTGDQQNVAVCDLLDNLLYRIV.

Belongs to the class-II aminoacyl-tRNA synthetase family. As to quaternary structure, homodimer.

Its subcellular location is the cytoplasm. The enzyme catalyses tRNA(His) + L-histidine + ATP = L-histidyl-tRNA(His) + AMP + diphosphate + H(+). The sequence is that of Histidine--tRNA ligase from Ehrlichia ruminantium (strain Welgevonden).